Here is a 379-residue protein sequence, read N- to C-terminus: Class V chitinase CHIT5b (379 aa).

Residues 1-26 form the signal peptide; sequence MANILNLKHLLTLALILLALATKSST. In terms of domain architecture, GH18 spans 34-379; sequence RVKGIYWLEN…TQASKAWKLV (346 aa). Asparagine 68, asparagine 109, and asparagine 128 each carry an N-linked (GlcNAc...) asparagine glycan. Catalysis depends on glutamate 147, which acts as the Proton donor. N-linked (GlcNAc...) asparagine glycosylation is found at asparagine 192, asparagine 227, and asparagine 241.

The protein belongs to the glycosyl hydrolase 18 family. Chitinase class V subfamily.

The catalysed reaction is Random endo-hydrolysis of N-acetyl-beta-D-glucosaminide (1-&gt;4)-beta-linkages in chitin and chitodextrins.. Its pathway is glycan degradation; chitin degradation. Its function is as follows. Possesses chitinase activity in vitro toward glycol chitin, carboxymethyl-chitin, colloidal chitin, and the chitin oligosaccharides (N-acetylglucosamine) (GlcNAc)6 and (GlcNAc)5. Hydrolyzes (GlcNAc)6 into (GlcNAc)4 and (GlcNAc)2, or two (GlcNAc)3 molecules. Has the capacity to reduce hyphal growth of the fungus Trichoderma viride in an agar-plate bioassay. The polypeptide is Class V chitinase CHIT5b (Medicago truncatula (Barrel medic)).